A 451-amino-acid chain; its full sequence is Mannan endo-1,6-alpha-mannosidase DFG5 (451 aa).

Residues 1–21 (MVSLQQLTISILLLFTASVQS) form the signal peptide. N-linked (GlcNAc...) asparagine glycans are attached at residues Asn-86, Asn-111, Asn-135, Asn-203, Asn-243, Asn-268, and Asn-402. Residue Ala-429 is the site of GPI-anchor amidated alanine attachment. Positions 430 to 451 (GAGVLTAIVLAVILGGAIWMIF) are cleaved as a propeptide — removed in mature form.

This sequence belongs to the glycosyl hydrolase 76 family. In terms of processing, the GPI-anchor is attached to the protein in the endoplasmic reticulum and serves to target the protein to the cell surface. There, the glucosamine-inositol phospholipid moiety is cleaved off and the GPI-modified mannoprotein is covalently attached via its lipidless GPI glycan remnant to the 1,6-beta-glucan of the outer cell wall layer. Post-translationally, N-mannosylated.

The protein localises to the secreted. It is found in the cell wall. It localises to the cell membrane. It carries out the reaction Random hydrolysis of (1-&gt;6)-alpha-D-mannosidic linkages in unbranched (1-&gt;6)-mannans.. In terms of biological role, required for normal synthesis of the cell wall and alkaline pH-induced hypha formation. In Candida albicans (strain SC5314 / ATCC MYA-2876) (Yeast), this protein is Mannan endo-1,6-alpha-mannosidase DFG5 (DFG5).